The chain runs to 231 residues: Large ribosomal subunit protein uL1 (231 aa).

This sequence belongs to the universal ribosomal protein uL1 family. In terms of assembly, part of the 50S ribosomal subunit.

Functionally, binds directly to 23S rRNA. The L1 stalk is quite mobile in the ribosome, and is involved in E site tRNA release. Protein L1 is also a translational repressor protein, it controls the translation of the L11 operon by binding to its mRNA. The protein is Large ribosomal subunit protein uL1 of Verminephrobacter eiseniae (strain EF01-2).